A 138-amino-acid chain; its full sequence is Superoxide dismutase [Mn] (138 aa).

The Mn(2+) site is built by His2, His49, Asp133, and His137.

It belongs to the iron/manganese superoxide dismutase family. The cofactor is Mn(2+).

The enzyme catalyses 2 superoxide + 2 H(+) = H2O2 + O2. Its function is as follows. Destroys superoxide anion radicals which are normally produced within the cells and which are toxic to biological systems. This is Superoxide dismutase [Mn] (sodA) from Mycolicibacterium phlei (Mycobacterium phlei).